Reading from the N-terminus, the 178-residue chain is Endothelin-2 (178 aa).

The first 24 residues, 1–24 (MPAPGVHHPNTASPFLKTVAAGKG), serve as a signal peptide directing secretion. A propeptide spanning residues 25-46 (QVAAAPEHPAPSARARGSHLRP) is cleaved from the precursor. 2 disulfide bridges follow: cysteine 49–cysteine 63 and cysteine 51–cysteine 59. A propeptide spanning residues 70–178 (VNTPGQTAPY…RPTHPRRRKR (109 aa)) is cleaved from the precursor. Residues 96-111 (CECSSGGDPACATFCH) form an endothelin-like region. Residues 156 to 178 (RFPRRPQEAGRQLRPTHPRRRKR) form a disordered region. A compositionally biased stretch (basic residues) spans 169–178 (RPTHPRRRKR).

It belongs to the endothelin/sarafotoxin family.

The protein localises to the secreted. Endothelins are endothelium-derived vasoconstrictor peptides. The polypeptide is Endothelin-2 (EDN2) (Canis lupus familiaris (Dog)).